A 297-amino-acid chain; its full sequence is Putative heme-binding peroxidase (297 aa).

Residue histidine 74 is the Proton acceptor of the active site. Histidine 198 serves as a coordination point for heme b. Residue tryptophan 214 is the Tryptophan radical intermediate of the active site.

This sequence belongs to the peroxidase family. Cytochrome c peroxidase subfamily. The cofactor is heme b.

Functionally, destroys radicals which are normally produced within the cells and which are toxic to biological systems. This is Putative heme-binding peroxidase from Yarrowia lipolytica (strain CLIB 122 / E 150) (Yeast).